The sequence spans 690 residues: Elongation factor G (690 aa).

The tr-type G domain maps to glutamate 8 to leucine 283. Residues alanine 17 to threonine 24, aspartate 81 to histidine 85, and asparagine 135 to aspartate 138 each bind GTP.

It belongs to the TRAFAC class translation factor GTPase superfamily. Classic translation factor GTPase family. EF-G/EF-2 subfamily.

The protein resides in the cytoplasm. In terms of biological role, catalyzes the GTP-dependent ribosomal translocation step during translation elongation. During this step, the ribosome changes from the pre-translocational (PRE) to the post-translocational (POST) state as the newly formed A-site-bound peptidyl-tRNA and P-site-bound deacylated tRNA move to the P and E sites, respectively. Catalyzes the coordinated movement of the two tRNA molecules, the mRNA and conformational changes in the ribosome. The chain is Elongation factor G from Bradyrhizobium sp. (strain BTAi1 / ATCC BAA-1182).